Here is a 1097-residue protein sequence, read N- to C-terminus: uncharacterized protein (1097 aa).

Residues 31–1087 are a coiled coil; it reads LLNVARQEEE…TALNKLRTRH (1057 aa).

The protein belongs to the TRAFAC class myosin-kinesin ATPase superfamily. Myosin family. In terms of tissue distribution, specifically expressed in muscles of the head including temporalis and tensor veli palatini.

In terms of biological role, has most probably lost the function in masticatory muscles contraction suspected for its homologs in dog (AC F1PT61) and apes. This is an uncharacterized protein from Homo sapiens (Human).